Consider the following 397-residue polypeptide: MAKEKFERNKPHVNVGTIGHVDHGKTTLTAALTRVCSEVFGSARVDFDKIDSAPEEKARGITINTAHVEYDSNIRHYAHVDCPGHADYVKNMITGAAQMDGAILVCSAADGPMPQTREHILLSRQVGVPYIVVFLNKADMVDDAELLELVEMEVRDLLSTYDFPGDDTPIIIGSALMALNGEDTNELGTSAVKKLVETLDTYIPEPVRAIDRPFLMPIEDVFSISGRGTVVTGRVERGIVKIQEEIEIVGLRPTTKTTCTGVEMFRKLLDEGRAGENCGVLLRGTKRDEVERGQVLAKPGTIKPHTKFEAEVYVLSKEEGGRHTPFFKGYRPQFYFRTTDVTGSCELPEGVEMVMPGDNIKMVVTLIKPIAMEDGLRFAIREGGRTVGAGVVAKIIE.

The region spanning 10 to 207 (KPHVNVGTIG…TLDTYIPEPV (198 aa)) is the tr-type G domain. Positions 19-26 (GHVDHGKT) are G1. 19 to 26 (GHVDHGKT) is a GTP binding site. A Mg(2+)-binding site is contributed by T26. The G2 stretch occupies residues 60-64 (GITIN). The interval 81 to 84 (DCPG) is G3. GTP-binding positions include 81–85 (DCPGH) and 136–139 (NKAD). Residues 136 to 139 (NKAD) form a G4 region. The tract at residues 174–176 (SAL) is G5.

This sequence belongs to the TRAFAC class translation factor GTPase superfamily. Classic translation factor GTPase family. EF-Tu/EF-1A subfamily. Monomer.

Its subcellular location is the cytoplasm. The catalysed reaction is GTP + H2O = GDP + phosphate + H(+). GTP hydrolase that promotes the GTP-dependent binding of aminoacyl-tRNA to the A-site of ribosomes during protein biosynthesis. The protein is Elongation factor Tu of Ectopseudomonas mendocina (strain ymp) (Pseudomonas mendocina).